The chain runs to 303 residues: Coenzyme PQQ synthesis protein B (303 aa).

Belongs to the PqqB family.

The protein operates within cofactor biosynthesis; pyrroloquinoline quinone biosynthesis. In terms of biological role, may be involved in the transport of PQQ or its precursor to the periplasm. The protein is Coenzyme PQQ synthesis protein B of Pseudomonas putida (strain ATCC 47054 / DSM 6125 / CFBP 8728 / NCIMB 11950 / KT2440).